The chain runs to 106 residues: UPF0473 protein LSEI_0788 (106 aa).

The protein belongs to the UPF0473 family.

This Lacticaseibacillus paracasei (strain ATCC 334 / BCRC 17002 / CCUG 31169 / CIP 107868 / KCTC 3260 / NRRL B-441) (Lactobacillus paracasei) protein is UPF0473 protein LSEI_0788.